The primary structure comprises 274 residues: tRNA pseudouridine synthase A (274 aa).

Asp51 (nucleophile) is an active-site residue. Position 109 (Tyr109) interacts with substrate.

It belongs to the tRNA pseudouridine synthase TruA family. In terms of assembly, homodimer.

The enzyme catalyses uridine(38/39/40) in tRNA = pseudouridine(38/39/40) in tRNA. Formation of pseudouridine at positions 38, 39 and 40 in the anticodon stem and loop of transfer RNAs. The protein is tRNA pseudouridine synthase A of Acidovorax ebreus (strain TPSY) (Diaphorobacter sp. (strain TPSY)).